Consider the following 134-residue polypeptide: MSNTENKQKRVSVGKDIATRRRVARARRHFRIRKNLRGTPEAPRLVVHRSSRHMHVQIIDDVAGHTLAAASSIEAEVRATEGDKKAKGAKVGQLIAERAKAAGIEQVVFDRAGYKYHGRVAALADAAREGGLKF.

The protein belongs to the universal ribosomal protein uL18 family. In terms of assembly, part of the 50S ribosomal subunit; part of the 5S rRNA/L5/L18/L25 subcomplex. Contacts the 5S and 23S rRNAs.

Functionally, this is one of the proteins that bind and probably mediate the attachment of the 5S RNA into the large ribosomal subunit, where it forms part of the central protuberance. This chain is Large ribosomal subunit protein uL18, found in Corynebacterium glutamicum (strain ATCC 13032 / DSM 20300 / JCM 1318 / BCRC 11384 / CCUG 27702 / LMG 3730 / NBRC 12168 / NCIMB 10025 / NRRL B-2784 / 534).